Consider the following 677-residue polypeptide: uncharacterized protein (677 aa).

The tract at residues 1-87 (MGRHSKPDPE…PTGAEPIAAA (87 aa)) is disordered. Positions 17–29 (SDGHAAEQQHWED) are enriched in basic and acidic residues. Residues 51 to 64 (GHYSAVGGYSASGS) show a composition bias toward low complexity. Transmembrane regions (helical) follow at residues 115–135 (VSIG…GVIL), 192–212 (VAVA…IGKW), 313–333 (EAVA…IGAV), and 474–494 (ATLA…IMLD).

It is found in the cell membrane. This is an uncharacterized protein from Mycobacterium tuberculosis (strain CDC 1551 / Oshkosh).